Consider the following 437-residue polypeptide: tRNA-2-methylthio-N(6)-dimethylallyladenosine synthase (437 aa).

The 117-residue stretch at 1–117 (MKFYIKTFGC…LPNLLEEAKS (117 aa)) folds into the MTTase N-terminal domain. [4Fe-4S] cluster is bound by residues cysteine 10, cysteine 46, cysteine 80, cysteine 156, cysteine 160, and cysteine 163. Residues 142–371 (RENKYTAFVT…INLQKDITFK (230 aa)) form the Radical SAM core domain. One can recognise a TRAM domain in the interval 374 to 435 (LEYQDKIVEI…RFSLEGSIIG (62 aa)).

It belongs to the methylthiotransferase family. MiaB subfamily. As to quaternary structure, monomer. It depends on [4Fe-4S] cluster as a cofactor.

The protein resides in the cytoplasm. The enzyme catalyses N(6)-dimethylallyladenosine(37) in tRNA + (sulfur carrier)-SH + AH2 + 2 S-adenosyl-L-methionine = 2-methylsulfanyl-N(6)-dimethylallyladenosine(37) in tRNA + (sulfur carrier)-H + 5'-deoxyadenosine + L-methionine + A + S-adenosyl-L-homocysteine + 2 H(+). Catalyzes the methylthiolation of N6-(dimethylallyl)adenosine (i(6)A), leading to the formation of 2-methylthio-N6-(dimethylallyl)adenosine (ms(2)i(6)A) at position 37 in tRNAs that read codons beginning with uridine. The protein is tRNA-2-methylthio-N(6)-dimethylallyladenosine synthase of Sulfurihydrogenibium sp. (strain YO3AOP1).